A 198-amino-acid chain; its full sequence is Large ribosomal subunit protein bL12m (198 aa).

The transit peptide at 1–36 (MLPSATSLLRGPCLGLRAAALRLVRQQVPHVCAVRL) directs the protein to the mitochondrion. The span at 106–115 (GAAPAPTAPE) shows a compositional bias: low complexity. A disordered region spans residues 106–126 (GAAPAPTAPEAAEEDVPKQKE). N6-acetyllysine occurs at positions 125, 138, 142, and 144. Residue K150 is modified to N6-acetyllysine; alternate. Position 150 is an N6-succinyllysine; alternate (K150). Residue K150 forms a Glycyl lysine isopeptide (Lys-Gly) (interchain with G-Cter in ubiquitin) linkage. Residue K162 is modified to N6-succinyllysine. N6-acetyllysine occurs at positions 163 and 173. The residue at position 178 (K178) is an N6-acetyllysine; alternate. K178 carries the post-translational modification N6-succinyllysine; alternate. At K185 the chain carries N6-acetyllysine.

Belongs to the bacterial ribosomal protein bL12 family. In terms of assembly, component of the mitochondrial ribosome large subunit (39S) which comprises a 16S rRNA and about 50 distinct proteins. Interacts with NOA1. In terms of processing, two mature forms are produced by differential two-step proteolytic cleavage. Cleaved by the mitochondrial processing protease to produce the long mature form and subsequently by the mitochondrial intermediate protease to produce the short mature form. Post-translationally, in the presence of CUL3, undergoes 'Lys-63'-linked ubiquitination at Lys-150 which results in proteasomal degradation.

It localises to the mitochondrion matrix. As a component of the mitochondrial large ribosomal subunit, plays a role in mitochondrial translation. When present in mitochondria as a free protein not associated with the ribosome, associates with mitochondrial RNA polymerase POLRMT to activate transcription. Required for POLRMT stability. This is Large ribosomal subunit protein bL12m (MRPL12) from Bos taurus (Bovine).